Here is a 473-residue protein sequence, read N- to C-terminus: Pup--protein ligase (473 aa).

Position 9 (Glu-9) interacts with Mg(2+). An ATP-binding site is contributed by Arg-54. Position 56 (Tyr-56) interacts with Mg(2+). The active-site Proton acceptor is Asp-58. Glu-64 is a Mg(2+) binding site. ATP-binding residues include Thr-67 and Trp-425.

It belongs to the Pup ligase/Pup deamidase family. Pup-conjugating enzyme subfamily.

The catalysed reaction is ATP + [prokaryotic ubiquitin-like protein]-L-glutamate + [protein]-L-lysine = ADP + phosphate + N(6)-([prokaryotic ubiquitin-like protein]-gamma-L-glutamyl)-[protein]-L-lysine.. It functions in the pathway protein degradation; proteasomal Pup-dependent pathway. The protein operates within protein modification; protein pupylation. Its function is as follows. Catalyzes the covalent attachment of the prokaryotic ubiquitin-like protein modifier Pup to the proteasomal substrate proteins, thereby targeting them for proteasomal degradation. This tagging system is termed pupylation. The ligation reaction involves the side-chain carboxylate of the C-terminal glutamate of Pup and the side-chain amino group of a substrate lysine. In Brachybacterium faecium (strain ATCC 43885 / DSM 4810 / JCM 11609 / LMG 19847 / NBRC 14762 / NCIMB 9860 / 6-10), this protein is Pup--protein ligase.